A 280-amino-acid polypeptide reads, in one-letter code: Probable formate transporter (280 aa).

6 helical membrane-spanning segments follow: residues 33-49 (LSFV…LLAE), 67-83 (LVFG…VVIA), 116-133 (SWVF…VLAY), 177-195 (FWRA…YLAV), 204-219 (SFGI…CIGF), and 253-272 (LGNI…FTYL).

Belongs to the FNT transporter (TC 1.A.16) family.

The protein localises to the cell membrane. Its function is as follows. May act as a formate transporter. The sequence is that of Probable formate transporter (fdhC) from Methanobacterium formicicum.